A 1096-amino-acid chain; its full sequence is Constitutive coactivator of PPAR-gamma-like protein 2 (1096 aa).

Low complexity predominate over residues 35-59 (QQQHLHRQLPPTAALAPGAPRAARG). 3 disordered regions span residues 35–113 (QQQH…PPQL), 508–579 (NYLP…DGEP), and 971–1096 (SRSS…RKED). The residue at position 58 (Arg58) is an Omega-N-methylarginine. Over residues 82–95 (TRHHHPAHHFHHHG) the composition is skewed to basic residues. A compositionally biased stretch (pro residues) spans 101 to 113 (LHPPLPPPPPPQL). Residues 540 to 559 (HITEAFHHQPEWGNPNRDRG) show a composition bias toward basic and acidic residues. Arg977 is subject to Omega-N-methylarginine. Basic and acidic residues-rich tracts occupy residues 1041 to 1050 (IKEEKSDHRL) and 1076 to 1096 (NREK…RKED). Lys1042 participates in a covalent cross-link: Glycyl lysine isopeptide (Lys-Gly) (interchain with G-Cter in SUMO2).

The protein belongs to the constitutive coactivator of PPAR-gamma family. Expressed at low levels in a number of tissues.

The polypeptide is Constitutive coactivator of PPAR-gamma-like protein 2 (FAM120C) (Homo sapiens (Human)).